The following is a 239-amino-acid chain: Sensory rhodopsin-1 (239 aa).

The Extracellular portion of the chain corresponds to 1–3 (MDA). Residues 4–25 (VATAYLGGAVALIVGVAFVWLL) traverse the membrane as a helical segment. At 26–34 (YRSLDGSPH) the chain is on the cytoplasmic side. A helical transmembrane segment spans residues 35–56 (QSALAPLAIIPVFAGLSYVGMA). Residues 57 to 70 (YDIGTVIVNGNQIV) lie on the Extracellular side of the membrane. The helical transmembrane segment at 71–92 (GLRYIDWLVTTPILVGYVGYAA) threads the bilayer. At 93 to 95 (GAS) the chain is on the cytoplasmic side. A helical membrane pass occupies residues 96 to 118 (RRSIIGVMVADALMIAVGAGAVV). The Extracellular segment spans residues 119–122 (TDGT). The helical transmembrane segment at 123-150 (LKWALFGVSSIFHLSLFAYLYVIFPRVV) threads the bilayer. The Cytoplasmic segment spans residues 151–153 (PDV). The helical transmembrane segment at 154–181 (PEQIGLFNLLKNHIGLLWLAYPLVWLFG) threads the bilayer. Residues 182-189 (PAGIGEAT) are Extracellular-facing. Residues 190-222 (AAGVALTYVFLDVLAKVPYVYFFYARRRVFMHS) form a helical membrane-spanning segment. Lys-205 carries the post-translational modification N6-(retinylidene)lysine. Residues 223–239 (ESPPAPEQATVEATAAD) are Cytoplasmic-facing.

This sequence belongs to the archaeal/bacterial/fungal opsin family. Interacts with HTR-I.

It is found in the cell membrane. Its function is as follows. Involved in the control of phototaxis. Mediates both photoattractant (in the orange light) and photophobic (in the near UV light) responses. The signal is then transmitted to the sensory rhodopsin I transducer (HTR-I). This Halobacterium salinarum (strain ATCC 29341 / DSM 671 / R1) protein is Sensory rhodopsin-1 (sopI).